The following is a 510-amino-acid chain: GMP synthase [glutamine-hydrolyzing] (510 aa).

Residues 5-195 enclose the Glutamine amidotransferase type-1 domain; it reads LVLILDFGGQ…LYEVCHCQGD (191 aa). The active-site Nucleophile is Cys82. Catalysis depends on residues His169 and Glu171. In terms of domain architecture, GMPS ATP-PPase spans 196-385; the sequence is WTMENYIEKE…LGVPEEIVWR (190 aa). 223–229 is a binding site for ATP; sequence SGGVDSS.

Homodimer.

It carries out the reaction XMP + L-glutamine + ATP + H2O = GMP + L-glutamate + AMP + diphosphate + 2 H(+). It functions in the pathway purine metabolism; GMP biosynthesis; GMP from XMP (L-Gln route): step 1/1. In terms of biological role, catalyzes the synthesis of GMP from XMP. The protein is GMP synthase [glutamine-hydrolyzing] of Alkaliphilus metalliredigens (strain QYMF).